Reading from the N-terminus, the 249-residue chain is Small ribosomal subunit protein eS6 (249 aa).

Basic residues predominate over residues 223–238 (LRQRDHSKKHTRKVHA). A disordered region spans residues 223–249 (LRQRDHSKKHTRKVHAQRAEVAAFQKK).

The protein belongs to the eukaryotic ribosomal protein eS6 family. Ribosomal protein S6 is the major substrate of protein kinases in eukaryote ribosomes.

Functionally, component of the 40S small ribosomal subunit. Plays an important role in controlling cell growth and proliferation through the selective translation of particular classes of mRNA. In Leishmania major, this protein is Small ribosomal subunit protein eS6 (RPS6).